Consider the following 73-residue polypeptide: Large ribosomal subunit protein uL29 (73 aa).

This sequence belongs to the universal ribosomal protein uL29 family.

The protein is Large ribosomal subunit protein uL29 (rpmC) of Aquifex aeolicus (strain VF5).